A 184-amino-acid chain; its full sequence is Small ribosomal subunit protein uS4 (184 aa).

Residues 108–172 (RRLQTQVHRL…SPMTKESHPE (65 aa)) form the S4 RNA-binding domain. The disordered stretch occupies residues 163-184 (SPMTKESHPERPAQIAASVVEE).

It belongs to the universal ribosomal protein uS4 family. Part of the 30S ribosomal subunit. Contacts protein S5. The interaction surface between S4 and S5 is involved in control of translational fidelity.

Functionally, one of the primary rRNA binding proteins, it binds directly to 16S rRNA where it nucleates assembly of the body of the 30S subunit. Its function is as follows. With S5 and S12 plays an important role in translational accuracy. This is Small ribosomal subunit protein uS4 from Methanococcoides burtonii (strain DSM 6242 / NBRC 107633 / OCM 468 / ACE-M).